Here is a 186-residue protein sequence, read N- to C-terminus: Negative modulator of initiation of replication (186 aa).

This sequence belongs to the SeqA family. In terms of assembly, homodimer. Polymerizes to form helical filaments.

The protein localises to the cytoplasm. Negative regulator of replication initiation, which contributes to regulation of DNA replication and ensures that replication initiation occurs exactly once per chromosome per cell cycle. Binds to pairs of hemimethylated GATC sequences in the oriC region, thus preventing assembly of replication proteins and re-initiation at newly replicated origins. Repression is relieved when the region becomes fully methylated. The sequence is that of Negative modulator of initiation of replication from Haemophilus ducreyi (strain 35000HP / ATCC 700724).